Here is a 30-residue protein sequence, read N- to C-terminus: Ribosome-inactivating protein momorcochin-S (30 aa).

It belongs to the ribosome-inactivating protein family. Type 1 RIP subfamily. In terms of processing, glycosylated.

It carries out the reaction Endohydrolysis of the N-glycosidic bond at one specific adenosine on the 28S rRNA.. Inactivates eukaryotic 60S ribosomal subunits. The polypeptide is Ribosome-inactivating protein momorcochin-S (Momordica cochinchinensis (Spiny bitter cucumber)).